The sequence spans 207 residues: 3-demethoxyubiquinol 3-hydroxylase (207 aa).

6 residues coordinate Fe cation: Glu-56, Glu-86, His-89, Glu-138, Glu-170, and His-173.

It belongs to the COQ7 family. The cofactor is Fe cation.

Its subcellular location is the cell membrane. It catalyses the reaction a 5-methoxy-2-methyl-3-(all-trans-polyprenyl)benzene-1,4-diol + AH2 + O2 = a 3-demethylubiquinol + A + H2O. It functions in the pathway cofactor biosynthesis; ubiquinone biosynthesis. Functionally, catalyzes the hydroxylation of 2-nonaprenyl-3-methyl-6-methoxy-1,4-benzoquinol during ubiquinone biosynthesis. This Cupriavidus taiwanensis (strain DSM 17343 / BCRC 17206 / CCUG 44338 / CIP 107171 / LMG 19424 / R1) (Ralstonia taiwanensis (strain LMG 19424)) protein is 3-demethoxyubiquinol 3-hydroxylase.